The following is a 349-amino-acid chain: S-adenosylmethionine:tRNA ribosyltransferase-isomerase (349 aa).

This sequence belongs to the QueA family. In terms of assembly, monomer.

Its subcellular location is the cytoplasm. The catalysed reaction is 7-aminomethyl-7-carbaguanosine(34) in tRNA + S-adenosyl-L-methionine = epoxyqueuosine(34) in tRNA + adenine + L-methionine + 2 H(+). It participates in tRNA modification; tRNA-queuosine biosynthesis. Functionally, transfers and isomerizes the ribose moiety from AdoMet to the 7-aminomethyl group of 7-deazaguanine (preQ1-tRNA) to give epoxyqueuosine (oQ-tRNA). The protein is S-adenosylmethionine:tRNA ribosyltransferase-isomerase of Pseudomonas putida (strain ATCC 700007 / DSM 6899 / JCM 31910 / BCRC 17059 / LMG 24140 / F1).